We begin with the raw amino-acid sequence, 376 residues long: Gibberellin 20 oxidase 4 (376 aa).

The 101-residue stretch at D222–P322 folds into the Fe2OG dioxygenase domain. The Fe cation site is built by H247, D249, and H303. R313 is an active-site residue.

This sequence belongs to the iron/ascorbate-dependent oxidoreductase family. GA20OX subfamily. The cofactor is Fe(2+). It depends on L-ascorbate as a cofactor. As to expression, expressed in roots. Detected in leaves, inflorescences and siliques, but not in stems and dry seeds.

It carries out the reaction gibberellin A12 + 2 2-oxoglutarate + 3 O2 + H(+) = gibberellin A9 + 2 succinate + 3 CO2 + 2 H2O. The catalysed reaction is gibberellin A53 + 2 2-oxoglutarate + 3 O2 + H(+) = gibberellin A20 + 2 succinate + 3 CO2 + 2 H2O. Its pathway is plant hormone biosynthesis; gibberellin biosynthesis. Functionally, key oxidase enzyme in the biosynthesis of gibberellin that catalyzes the conversion of GA12 and GA53 to GA9 and GA20 respectively, via a three-step oxidation at C-20 of the GA skeleton. The protein is Gibberellin 20 oxidase 4 (GA20OX4) of Arabidopsis thaliana (Mouse-ear cress).